A 223-amino-acid chain; its full sequence is Uracil-DNA glycosylase (223 aa).

The active-site Proton acceptor is D66.

This sequence belongs to the uracil-DNA glycosylase (UDG) superfamily. UNG family.

The protein resides in the cytoplasm. The enzyme catalyses Hydrolyzes single-stranded DNA or mismatched double-stranded DNA and polynucleotides, releasing free uracil.. In terms of biological role, excises uracil residues from the DNA which can arise as a result of misincorporation of dUMP residues by DNA polymerase or due to deamination of cytosine. In Sulfurimonas denitrificans (strain ATCC 33889 / DSM 1251) (Thiomicrospira denitrificans (strain ATCC 33889 / DSM 1251)), this protein is Uracil-DNA glycosylase.